The sequence spans 270 residues: Interleukin-2 receptor subunit alpha (270 aa).

The first 21 residues, 1-21, serve as a signal peptide directing secretion; sequence MEPSLLMWGFFTFTMIPGCMA. Positions 22-84 constitute a Sushi 1 domain; the sequence is GACVQQPPSL…FWENKCQCMP (63 aa). Over 22–245 the chain is Extracellular; that stretch reads GACVQQPPSL…QPIIFTTQYQ (224 aa). 3 cysteine pairs are disulfide-bonded: C24-C67, C49-C80, and C51-C82. Residues N33 and N70 are each glycosylated (N-linked (GlcNAc...) asparagine). The interval 87 to 124 is disordered; sequence SPRIPVKQVTPRPEEQKERKTTETQGQMQPPNQANLPG. Residues 98-108 are compositionally biased toward basic and acidic residues; that stretch reads RPEEQKERKTT. Positions 112–121 are enriched in polar residues; it reads GQMQPPNQAN. The 68-residue stretch at 124-191 folds into the Sushi 2 domain; the sequence is GHCKEPPPWE…WTQPKLKCKS (68 aa). 2 disulfide bridges follow: C126/C171 and C153/C189. 2 N-linked (GlcNAc...) asparagine glycosylation sites follow: N164 and N195. A disordered region spans residues 190-225; the sequence is KSEKENGSFPEPQMSTAAPPTTKTSLPTRTKGTTDS. Positions 202 to 225 are enriched in polar residues; the sequence is QMSTAAPPTTKTSLPTRTKGTTDS. An N-linked (GlcNAc...) asparagine glycan is attached at N227. Residues 246–264 form a helical membrane-spanning segment; sequence LAVAGCVLLLLSILLLSGL. At 265-270 the chain is on the cytoplasmic side; sequence TWQRRR.

In terms of assembly, non-covalent dimer of an alpha and a beta subunit. IL2R exists in 3 different forms: a high affinity dimer, an intermediate affinity monomer (beta subunit), and a low affinity monomer (alpha subunit). The high and intermediate affinity forms also associate with a gamma subunit.

It is found in the membrane. Functionally, receptor for interleukin-2. The receptor is involved in the regulation of immune tolerance by controlling regulatory T cells (TREGs) activity. TREGs suppress the activation and expansion of autoreactive T-cells. In Sus scrofa (Pig), this protein is Interleukin-2 receptor subunit alpha (IL2RA).